The chain runs to 192 residues: MANPNEWSQFYNNNQTFFTTSTTASTAVTTTTAGDTTSIDSRLSPETGRVTKPTRRRSRASRRTPTTLLNTDTSNFRAMVQQYTGGPSAMAFGSGNTTSAFSLTSSSDPSAGSSQQAPWQYNFQPHAPLQPPQRPYMFSLNNVNPVVGYSNMNNPNTMVSGVFGTVDGSGGGGSAPSSKEATNSNSSSSRLQ.

The segment covering 24–38 (ASTAVTTTTAGDTTS) has biased composition (low complexity). Positions 24 to 65 (ASTAVTTTTAGDTTSIDSRLSPETGRVTKPTRRRSRASRRTP) are disordered. Over residues 52 to 62 (KPTRRRSRASR) the composition is skewed to basic residues. The VQ signature appears at 76-85 (FRAMVQQYTG). 2 disordered regions span residues 101–135 (FSLTSSSDPSAGSSQQAPWQYNFQPHAPLQPPQRP) and 163–192 (FGTVDGSGGGGSAPSSKEATNSNSSSSRLQ). 2 stretches are compositionally biased toward low complexity: residues 102 to 114 (SLTSSSDPSAGSS) and 175 to 192 (APSSKEATNSNSSSSRLQ).

The protein resides in the nucleus. Functionally, may function as positive regulator of plant growth. The chain is VQ motif-containing protein 22 from Arabidopsis thaliana (Mouse-ear cress).